Here is a 116-residue protein sequence, read N- to C-terminus: PTS system cellobiose-specific EIIA component (116 aa).

The PTS EIIA type-3 domain occupies 11–109 (DDYMGVVMGI…AVEVVGQEQR (99 aa)). The active-site Tele-phosphohistidine intermediate is histidine 85. Histidine 85 carries the post-translational modification Phosphohistidine; by HPr. Aspartate 88 serves as a coordination point for Mg(2+).

As to quaternary structure, homotrimer. Requires Mg(2+) as cofactor.

The phosphoenolpyruvate-dependent sugar phosphotransferase system (sugar PTS), a major carbohydrate active transport system, catalyzes the phosphorylation of incoming sugar substrates concomitantly with their translocation across the cell membrane. Involved in cellobiose transport with PtcB and CelB. This system can also transport lactose. The protein is PTS system cellobiose-specific EIIA component of Lactococcus lactis subsp. lactis (strain IL1403) (Streptococcus lactis).